A 555-amino-acid chain; its full sequence is 2-succinyl-5-enolpyruvyl-6-hydroxy-3-cyclohexene-1-carboxylate synthase (555 aa).

It belongs to the TPP enzyme family. MenD subfamily. In terms of assembly, homodimer. Mg(2+) is required as a cofactor. The cofactor is Mn(2+). Thiamine diphosphate serves as cofactor.

It catalyses the reaction isochorismate + 2-oxoglutarate + H(+) = 5-enolpyruvoyl-6-hydroxy-2-succinyl-cyclohex-3-ene-1-carboxylate + CO2. It participates in quinol/quinone metabolism; 1,4-dihydroxy-2-naphthoate biosynthesis; 1,4-dihydroxy-2-naphthoate from chorismate: step 2/7. It functions in the pathway quinol/quinone metabolism; menaquinone biosynthesis. Its function is as follows. Catalyzes the thiamine diphosphate-dependent decarboxylation of 2-oxoglutarate and the subsequent addition of the resulting succinic semialdehyde-thiamine pyrophosphate anion to isochorismate to yield 2-succinyl-5-enolpyruvyl-6-hydroxy-3-cyclohexene-1-carboxylate (SEPHCHC). This chain is 2-succinyl-5-enolpyruvyl-6-hydroxy-3-cyclohexene-1-carboxylate synthase, found in Bacteroides thetaiotaomicron (strain ATCC 29148 / DSM 2079 / JCM 5827 / CCUG 10774 / NCTC 10582 / VPI-5482 / E50).